The chain runs to 365 residues: Histidinol-phosphate aminotransferase 2 (365 aa).

K221 is subject to N6-(pyridoxal phosphate)lysine.

The protein belongs to the class-II pyridoxal-phosphate-dependent aminotransferase family. Histidinol-phosphate aminotransferase subfamily. As to quaternary structure, homodimer. Pyridoxal 5'-phosphate is required as a cofactor.

It carries out the reaction L-histidinol phosphate + 2-oxoglutarate = 3-(imidazol-4-yl)-2-oxopropyl phosphate + L-glutamate. It participates in amino-acid biosynthesis; L-histidine biosynthesis; L-histidine from 5-phospho-alpha-D-ribose 1-diphosphate: step 7/9. This Bradyrhizobium diazoefficiens (strain JCM 10833 / BCRC 13528 / IAM 13628 / NBRC 14792 / USDA 110) protein is Histidinol-phosphate aminotransferase 2 (hisC2).